The primary structure comprises 351 residues: sn-1 oleoyl-lipid 12-desaturase (351 aa).

2 consecutive transmembrane segments (helical) span residues 46-66 (WASV…IIYL) and 68-88 (WYCL…AFVV). The Histidine box-1 motif lies at 90–94 (HDCGH). A helical membrane pass occupies residues 102-122 (WVNDLVGHIAFAPLIYPFHSW). The Histidine box-2 signature appears at 126-130 (HDHHH). The next 2 membrane-spanning stretches (helical) occupy residues 199 to 219 (IAVV…TTGV) and 222 to 242 (FVKF…TFTI). A Histidine box-3 motif is present at residues 290 to 294 (HHLSV).

It belongs to the fatty acid desaturase type 2 family. Requires Fe(2+) as cofactor.

The protein resides in the membrane. The catalysed reaction is a 1-[(9Z)-octadecenoyl]-2-acyl-glycerolipid + 2 reduced [2Fe-2S]-[ferredoxin] + O2 + 2 H(+) = a 1-[(9Z,12Z)-octadecdienoyl]-2-acyl-glycerolipid + 2 oxidized [2Fe-2S]-[ferredoxin] + 2 H2O. Its pathway is lipid metabolism; polyunsaturated fatty acid biosynthesis. In terms of biological role, desaturase involved in fatty acid biosynthesis. Introduces a double bond at carbon 12 of oleoyl groups (18:1) attached to the sn-1 position of the glycerol moiety of membrane glycerolipids. This enzyme is involved in chilling tolerance because the phase transition temperature of lipids of cellular membranes depends on the degree of unsaturation of fatty acids of the membrane lipids. The protein is sn-1 oleoyl-lipid 12-desaturase of Synechocystis sp. (strain ATCC 27184 / PCC 6803 / Kazusa).